We begin with the raw amino-acid sequence, 427 residues long: 3-phosphoshikimate 1-carboxyvinyltransferase (427 aa).

Positions 20, 21, and 25 each coordinate 3-phosphoshikimate. Residue K20 coordinates phosphoenolpyruvate. Phosphoenolpyruvate-binding residues include G92 and R120. Residues S166, Q168, D312, and K339 each coordinate 3-phosphoshikimate. A phosphoenolpyruvate-binding site is contributed by Q168. D312 functions as the Proton acceptor in the catalytic mechanism. The phosphoenolpyruvate site is built by R343 and R385.

It belongs to the EPSP synthase family. Monomer.

It is found in the cytoplasm. The catalysed reaction is 3-phosphoshikimate + phosphoenolpyruvate = 5-O-(1-carboxyvinyl)-3-phosphoshikimate + phosphate. It functions in the pathway metabolic intermediate biosynthesis; chorismate biosynthesis; chorismate from D-erythrose 4-phosphate and phosphoenolpyruvate: step 6/7. In terms of biological role, catalyzes the transfer of the enolpyruvyl moiety of phosphoenolpyruvate (PEP) to the 5-hydroxyl of shikimate-3-phosphate (S3P) to produce enolpyruvyl shikimate-3-phosphate and inorganic phosphate. The protein is 3-phosphoshikimate 1-carboxyvinyltransferase of Streptococcus mutans serotype c (strain ATCC 700610 / UA159).